We begin with the raw amino-acid sequence, 496 residues long: uncharacterized protein (496 aa).

The signal sequence occupies residues 1–19 (MTTGYILIAAILILGGVIA). Residues 45 to 67 (AVLVTILTGGLVSATTLAILFIA) form a helical membrane-spanning segment. The tract at residues 113 to 137 (LETTRTDKKQVETQRDQAKKEKLKA) is disordered.

The protein resides in the membrane. This is an uncharacterized protein from Nostoc sp. (strain PCC 7120 / SAG 25.82 / UTEX 2576).